Consider the following 306-residue polypeptide: Elongation factor Ts (306 aa).

The segment at 80–83 (TDFV) is involved in Mg(2+) ion dislocation from EF-Tu.

Belongs to the EF-Ts family.

The protein resides in the cytoplasm. In terms of biological role, associates with the EF-Tu.GDP complex and induces the exchange of GDP to GTP. It remains bound to the aminoacyl-tRNA.EF-Tu.GTP complex up to the GTP hydrolysis stage on the ribosome. This is Elongation factor Ts from Clostridium kluyveri (strain NBRC 12016).